We begin with the raw amino-acid sequence, 182 residues long: Bifunctional protein PyrR (182 aa).

Positions 99–111 match the PRPP-binding motif; that stretch reads VILVDDVLYTGRT.

The protein belongs to the purine/pyrimidine phosphoribosyltransferase family. PyrR subfamily. As to quaternary structure, homodimer and homohexamer; in equilibrium.

The catalysed reaction is UMP + diphosphate = 5-phospho-alpha-D-ribose 1-diphosphate + uracil. Regulates transcriptional attenuation of the pyrimidine nucleotide (pyr) operon by binding in a uridine-dependent manner to specific sites on pyr mRNA. This disrupts an antiterminator hairpin in the RNA and favors formation of a downstream transcription terminator, leading to a reduced expression of downstream genes. Functionally, also displays a weak uracil phosphoribosyltransferase activity which is not physiologically significant. This Alkaliphilus metalliredigens (strain QYMF) protein is Bifunctional protein PyrR.